Here is a 230-residue protein sequence, read N- to C-terminus: MKIEPITGSEAEAFHRMGSRAFERYNEFVDLLVGAGIADGQTVVDLCCGSGELEIILTSRFPSLNLVGVDLSEDMVRIARDYAAEQGKELEFRHGDAQSPAGMEDLLGKADLVVSRHAFHRLTRLPAGFDTMLRLVKPGGAILNVSFLHLSDFDEPGFRTWVRFLKERPWDAEMQVAWALAHYYAPRLQDYRDALAQAADETPVSEQRIWVDDQGYGVATVKCFARRAAA.

Belongs to the methyltransferase superfamily.

The protein operates within antibiotic biosynthesis. Its function is as follows. Mediates C-methylation at the 8-position of the aminocoumarin moieties in coumermycin A1 in the biosynthetic pathway of coumermycin antibiotic. Active on both mono- and bis-amides for mono- and di-C-methylation adjacent to the phenolic hydroxyl before it is glycosylated by CouM. This Streptomyces rishiriensis protein is C-methyltransferase CouO (couO).